We begin with the raw amino-acid sequence, 389 residues long: Protein Wnt-10b (389 aa).

An N-terminal signal peptide occupies residues 1-28; the sequence is MLEEPRPRPPPSGLAGLLFLALCSRALS. Threonine 46 is modified (phosphothreonine). Intrachain disulfides connect cysteine 83/cysteine 94, cysteine 136/cysteine 144, cysteine 146/cysteine 199, cysteine 247/cysteine 261, cysteine 249/cysteine 256, cysteine 318/cysteine 349, cysteine 334/cysteine 344, cysteine 348/cysteine 388, cysteine 364/cysteine 379, cysteine 366/cysteine 376, and cysteine 371/cysteine 372. N-linked (GlcNAc...) asparagine glycosylation is present at asparagine 93. A disordered region spans residues 171–197; the sequence is KSFPHSLPSPGPGSSPSPGPQDTWEWG. Residues 177 to 189 are compositionally biased toward pro residues; it reads LPSPGPGSSPSPG. Residue serine 253 is the site of O-palmitoleoyl serine; by PORCN attachment. The N-linked (GlcNAc...) asparagine glycan is linked to asparagine 335.

It belongs to the Wnt family. As to quaternary structure, forms a soluble 1:1 complex with AFM; this prevents oligomerization and is required for prolonged biological activity. The complex with AFM may represent the physiological form in body fluids. In terms of processing, palmitoleoylation is required for efficient binding to frizzled receptors. Depalmitoleoylation leads to Wnt signaling pathway inhibition. Detected in most adult tissues. Highest levels were found in heart and skeletal muscle. Low levels are found in brain.

Its subcellular location is the secreted. It is found in the extracellular space. It localises to the extracellular matrix. Functionally, member of the Wnt ligand gene family that encodes for secreted proteins, which activate the Wnt signaling cascade. Specifically activates canonical Wnt/beta-catenin signaling and thus triggers beta-catenin/LEF/TCF-mediated transcriptional programs. Involved in signaling networks controlling stemness, pluripotency and cell fate decisions. Acts in the immune system, mammary gland, adipose tissue, bone and skin. The protein is Protein Wnt-10b (WNT10B) of Homo sapiens (Human).